The chain runs to 145 residues: Ponticulin-like protein B (145 aa).

The signal sequence occupies residues 1-22 (MLFIKSLLLLLSLIFAVSNATG). Asparagine 34 is a glycosylation site (N-linked (GlcNAc...) asparagine). The disordered stretch occupies residues 107–126 (DTTSSSTSPSSTSPSSTSPA). Positions 108–126 (TTSSSTSPSSTSPSSTSPA) are enriched in low complexity. Serine 117 carries GPI-like-anchor amidated serine lipidation. The propeptide at 118 to 145 (TSPSSTSPASTLIGSIAFVTLAALFALI) is removed in mature form.

Belongs to the ponticulin family. The GPI-like-anchor contains a phosphoceramide group, rather than a phosphatidyl group.

Its subcellular location is the cell membrane. Functionally, binds F-actin and nucleates actin assembly. The protein is Ponticulin-like protein B (ponB) of Dictyostelium discoideum (Social amoeba).